A 95-amino-acid chain; its full sequence is MPRSTNKGPFVDHHLMKKVDQAQKEGSKRPIKTWSRRSMVVPEMVGLTIAIHNGRQHVPVYISENMVGHKLGEFAITRTFRAHSGDRKAKKEGEK.

This sequence belongs to the universal ribosomal protein uS19 family.

Its function is as follows. Protein S19 forms a complex with S13 that binds strongly to the 16S ribosomal RNA. This is Small ribosomal subunit protein uS19 from Coxiella burnetii (strain CbuK_Q154) (Coxiella burnetii (strain Q154)).